The sequence spans 414 residues: Putative dipeptidase ARB_02715 (414 aa).

The first 20 residues, 1 to 20 (MAALFVSLLALTSLVPVQGA), serve as a signal peptide directing secretion. His45, Asp47, and Glu157 together coordinate Zn(2+). The cysteines at positions 96 and 186 are disulfide-linked. Residue His184 coordinates substrate. Positions 228 and 249 each coordinate Zn(2+). Residues Arg260 and Asp320 each contribute to the substrate site. N-linked (GlcNAc...) asparagine glycosylation is present at Asn392.

Belongs to the metallo-dependent hydrolases superfamily. Peptidase M19 family. Requires Zn(2+) as cofactor.

It catalyses the reaction an L-aminoacyl-L-amino acid + H2O = 2 an L-alpha-amino acid. Hydrolyzes a wide range of dipeptides. The polypeptide is Putative dipeptidase ARB_02715 (Arthroderma benhamiae (strain ATCC MYA-4681 / CBS 112371) (Trichophyton mentagrophytes)).